Here is a 211-residue protein sequence, read N- to C-terminus: Synaptosomal-associated protein 23 (211 aa).

An N-acetylmethionine modification is found at methionine 1. A phosphoserine mark is found at serine 5, serine 6, serine 20, serine 23, and serine 34. A t-SNARE coiled-coil homology 1 domain is found at 14 to 76 (HQITDESLES…RETEKTLTEL (63 aa)). Residues 23 to 76 (STRRILGLAIESQDAGIKTITMLDEQKEQLNRIEEGLDQINKDMRETEKTLTEL) are a coiled coil. S-palmitoyl cysteine attachment occurs at residues cysteine 79, cysteine 80, cysteine 83, cysteine 85, and cysteine 87. Serine 110 bears the Phosphoserine mark. Cysteine 112 is lipidated: S-palmitoyl cysteine. Positions 146 to 208 (DAREDEMEEN…DIANARAKKL (63 aa)) constitute a t-SNARE coiled-coil homology 2 domain. Phosphoserine is present on serine 161.

Belongs to the SNAP-25 family. As to quaternary structure, homotetramer (via coiled-coil domain), also forms heterotetramers with STX4 and VAMP3. Found in a complex with VAMP8 and STX1A. Found in a complex with VAMP8 and STX4 in pancreas. Interacts simultaneously with SNAPIN and SYN4. Interacts with STX1A. Interacts with STX12. Interacts tightly to multiple syntaxins and synaptobrevins/VAMPs. Interacts with ZDHHC13 (via ANK repeats). Interacts with ZDHHC17 (via ANK repeats). As to expression, ubiquitous. Highest levels where found in placenta.

It localises to the cell membrane. The protein resides in the synapse. The protein localises to the synaptosome. Functionally, essential component of the high affinity receptor for the general membrane fusion machinery and an important regulator of transport vesicle docking and fusion. The chain is Synaptosomal-associated protein 23 (SNAP23) from Homo sapiens (Human).